The chain runs to 252 residues: Probable S-methyl-5'-thioinosine phosphorylase (252 aa).

Phosphate-binding positions include Thr-8 and 44-45 (RH). Met-173 is a substrate binding site. Phosphate is bound at residue Thr-174. 197-199 (NYA) is a binding site for substrate.

It belongs to the PNP/MTAP phosphorylase family. MTAP subfamily. In terms of assembly, homotrimer.

It catalyses the reaction S-methyl-5'-thioinosine + phosphate = 5-(methylsulfanyl)-alpha-D-ribose 1-phosphate + hypoxanthine. Its pathway is purine metabolism; purine nucleoside salvage. In terms of biological role, catalyzes the reversible phosphorylation of S-methyl-5'-thioinosine (MTI) to hypoxanthine and 5-methylthioribose-1-phosphate. Involved in the breakdown of S-methyl-5'-thioadenosine (MTA), a major by-product of polyamine biosynthesis. Catabolism of (MTA) occurs via deamination to MTI and phosphorolysis to hypoxanthine. This Methanocaldococcus jannaschii (strain ATCC 43067 / DSM 2661 / JAL-1 / JCM 10045 / NBRC 100440) (Methanococcus jannaschii) protein is Probable S-methyl-5'-thioinosine phosphorylase.